A 120-amino-acid polypeptide reads, in one-letter code: Proteinase inhibitor (120 aa).

The signal sequence occupies residues 1–19 (MKQLIIATLLSALSGGCMA). Cysteines 43 and 65 form a disulfide.

Belongs to the protease inhibitor I38 family. In terms of assembly, monomer.

The protein resides in the periplasm. Inhibitor of the extracellular proteases A, B, and C of E.chrysanthemi and the S.marcescens 50 kDa extracellular protease. It forms a non-covalent bond with the proteases and may prevent autocatalytic cleavage of the proteases zymogen in the periplasm. This Dickeya chrysanthemi (Pectobacterium chrysanthemi) protein is Proteinase inhibitor (inh).